The chain runs to 531 residues: UDP-glucuronosyltransferase 2B13 (531 aa).

The first 24 residues, 1-24 (MPVKCISVLLLLLQLSCCFSSGSC), serve as a signal peptide directing secretion. Residues Asn69, Asn101, and Asn317 are each glycosylated (N-linked (GlcNAc...) asparagine). Residues 495–511 (VIGFLLACVAITTYLIV) form a helical membrane-spanning segment.

Belongs to the UDP-glycosyltransferase family.

Its subcellular location is the microsome membrane. The protein localises to the endoplasmic reticulum membrane. The catalysed reaction is glucuronate acceptor + UDP-alpha-D-glucuronate = acceptor beta-D-glucuronoside + UDP + H(+). Its function is as follows. UDPGT is of major importance in the conjugation and subsequent elimination of potentially toxic xenobiotics and endogenous compounds. Acts on small phenolic agents such as 2-beta-naphthol and 4-methylumbelliferone as well as bulky phenolic compounds like 2-hydroxy- and 4-hydroxybiphenyl. In contrast to 2B16 it is active toward octylgallate. The chain is UDP-glucuronosyltransferase 2B13 (UGT2B13) from Oryctolagus cuniculus (Rabbit).